Here is a 477-residue protein sequence, read N- to C-terminus: Trigger factor (477 aa).

The PPIase FKBP-type domain maps to 169–254 (EDRVTIDYLG…VKEVAKPNEL (86 aa)). The disordered stretch occupies residues 435–477 (VSKEELTAEDEDAASEAKPAKKAAAKKKAAPKKKAEEGKSEEA). The span at 454–466 (AKKAAAKKKAAPK) shows a compositional bias: basic residues. Basic and acidic residues predominate over residues 467 to 477 (KKAEEGKSEEA).

It belongs to the FKBP-type PPIase family. Tig subfamily.

It localises to the cytoplasm. It carries out the reaction [protein]-peptidylproline (omega=180) = [protein]-peptidylproline (omega=0). Functionally, involved in protein export. Acts as a chaperone by maintaining the newly synthesized protein in an open conformation. Functions as a peptidyl-prolyl cis-trans isomerase. This Brucella melitensis biotype 1 (strain ATCC 23456 / CCUG 17765 / NCTC 10094 / 16M) protein is Trigger factor (tig).